The primary structure comprises 158 residues: Lipoprotein signal peptidase (158 aa).

The next 4 helical transmembrane spans lie at 7-27, 38-58, 67-87, and 95-115; these read LFWI…YWVV, ILPG…FSLF, WLSL…PVLD, and GLIL…GYVV. Active-site residues include D116 and D132. Residues 125–145 traverse the membrane as a helical segment; the sequence is FAVFNMADSFISIGIVCLLLA.

Belongs to the peptidase A8 family.

It localises to the cell inner membrane. It catalyses the reaction Release of signal peptides from bacterial membrane prolipoproteins. Hydrolyzes -Xaa-Yaa-Zaa-|-(S,diacylglyceryl)Cys-, in which Xaa is hydrophobic (preferably Leu), and Yaa (Ala or Ser) and Zaa (Gly or Ala) have small, neutral side chains.. Its pathway is protein modification; lipoprotein biosynthesis (signal peptide cleavage). In terms of biological role, this protein specifically catalyzes the removal of signal peptides from prolipoproteins. The protein is Lipoprotein signal peptidase of Nostoc sp. (strain PCC 7120 / SAG 25.82 / UTEX 2576).